Here is a 113-residue protein sequence, read N- to C-terminus: uncharacterized protein (113 aa).

2 consecutive transmembrane segments (helical) span residues 25-45 (FGFC…CFII) and 49-69 (FEVE…LSVW).

The protein localises to the host membrane. This is an uncharacterized protein from Spiroplasma citri (SpV1).